The chain runs to 176 residues: MSRIDTPAASRMQTIARNPVMIALVMTLALAGCASKKNLPNDAAGLGLGAGAATPGSQQDFTVNVGDRIFFDTDSTSIRADAQATLDRQAQWLAKYPNYGITIEGHADERGTREYNLALGARRAAATRDYLVSRGVPGNRMRTISYGKEKPVAVCDDISCWSQNRRAVTVLGGAGS.

Residues 1-32 (MSRIDTPAASRMQTIARNPVMIALVMTLALAG) form the signal peptide. Residue Cys-33 is the site of N-palmitoyl cysteine attachment. The S-diacylglycerol cysteine moiety is linked to residue Cys-33. Residues 58-175 (QQDFTVNVGD…RAVTVLGGAG (118 aa)) form the OmpA-like domain.

It belongs to the Pal lipoprotein family. As to quaternary structure, the Tol-Pal system is composed of five core proteins: the inner membrane proteins TolA, TolQ and TolR, the periplasmic protein TolB and the outer membrane protein Pal. They form a network linking the inner and outer membranes and the peptidoglycan layer.

The protein resides in the cell outer membrane. In terms of biological role, part of the Tol-Pal system, which plays a role in outer membrane invagination during cell division and is important for maintaining outer membrane integrity. The polypeptide is Peptidoglycan-associated lipoprotein (Rhizobium meliloti (strain 1021) (Ensifer meliloti)).